Consider the following 322-residue polypeptide: 2-methylene-furan-3-one reductase (322 aa).

Residues K59, 174–175 (GV), 197–200 (STKK), Y215, I253, 264–266 (FVL), 311–312 (RA), and 311–322 (RATGKVVVYPIP) each bind NADP(+). Position 59 (K59) interacts with substrate.

The protein belongs to the zinc-containing alcohol dehydrogenase family. Quinone oxidoreductase subfamily. Monomer. The N-terminus is blocked.

It carries out the reaction 4-hydroxy-2,5-dimethyl-furan-3(2H)-one + NADP(+) = 4-hydroxy-5-methyl-2-methylenefuran-3(2H)-one + NADPH + H(+). Its function is as follows. Enone oxidoreductase involved in the biosynthesis of 4-hydroxy-2,5-dimethyl-3(2H)-furanone (HDMF or furaneol), the key flavor compound in strawberries. Can use both NADH and NADPH as the electron donor. This Fragaria ananassa (Strawberry) protein is 2-methylene-furan-3-one reductase (EO).